Consider the following 515-residue polypeptide: Ribose import ATP-binding protein RbsA 1 (515 aa).

ABC transporter domains follow at residues 8–244 (FQME…IGRE) and 256–503 (VPAT…LNIH). ATP is bound at residue 40 to 47 (GENGAGKS).

This sequence belongs to the ABC transporter superfamily. Ribose importer (TC 3.A.1.2.1) family. As to quaternary structure, the complex is composed of an ATP-binding protein (RbsA), two transmembrane proteins (RbsC) and a solute-binding protein (RbsB).

Its subcellular location is the cell inner membrane. It carries out the reaction D-ribose(out) + ATP + H2O = D-ribose(in) + ADP + phosphate + H(+). Functionally, part of the ABC transporter complex RbsABC involved in ribose import. Responsible for energy coupling to the transport system. The polypeptide is Ribose import ATP-binding protein RbsA 1 (Mesorhizobium japonicum (strain LMG 29417 / CECT 9101 / MAFF 303099) (Mesorhizobium loti (strain MAFF 303099))).